The following is a 440-amino-acid chain: Glutamate-1-semialdehyde 2,1-aminomutase (440 aa).

An N6-(pyridoxal phosphate)lysine modification is found at K271.

The protein belongs to the class-III pyridoxal-phosphate-dependent aminotransferase family. HemL subfamily. Homodimer. Requires pyridoxal 5'-phosphate as cofactor.

The protein resides in the cytoplasm. The enzyme catalyses (S)-4-amino-5-oxopentanoate = 5-aminolevulinate. It participates in porphyrin-containing compound metabolism; protoporphyrin-IX biosynthesis; 5-aminolevulinate from L-glutamyl-tRNA(Glu): step 2/2. In Chlamydia pneumoniae (Chlamydophila pneumoniae), this protein is Glutamate-1-semialdehyde 2,1-aminomutase.